Consider the following 786-residue polypeptide: Endonuclease MutS2 (786 aa).

Residue 335–342 (GPNTGGKT) coordinates ATP. One can recognise a Smr domain in the interval 711–786 (LDLRGERFEN…GLGVTVVELK (76 aa)).

It belongs to the DNA mismatch repair MutS family. MutS2 subfamily. As to quaternary structure, homodimer. Binds to stalled ribosomes, contacting rRNA.

Its function is as follows. Endonuclease that is involved in the suppression of homologous recombination and thus may have a key role in the control of bacterial genetic diversity. Acts as a ribosome collision sensor, splitting the ribosome into its 2 subunits. Detects stalled/collided 70S ribosomes which it binds and splits by an ATP-hydrolysis driven conformational change. Acts upstream of the ribosome quality control system (RQC), a ribosome-associated complex that mediates the extraction of incompletely synthesized nascent chains from stalled ribosomes and their subsequent degradation. Probably generates substrates for RQC. This is Endonuclease MutS2 from Bacillus cytotoxicus (strain DSM 22905 / CIP 110041 / 391-98 / NVH 391-98).